The following is a 359-amino-acid chain: Fc receptor-like A (359 aa).

A signal peptide spans 1 to 27 (MKLGCVLMAWALYLSLGVLWVAQMLLA). 2 consecutive Ig-like C2-type domains span residues 70-159 (PFHL…ETAS) and 170-257 (PAPI…PQLE). 2 disulfides stabilise this stretch: Cys-99/Cys-143 and Cys-192/Cys-240. Positions 259–313 (RVQGASSSAAPPTLNPAPQKSAAPGTAPEEAPGPLPPPPTPSSEDPGFSSPLGMP) are disordered. A compositionally biased stretch (low complexity) spans 279–288 (SAAPGTAPEE). Residues 289–299 (APGPLPPPPTP) are compositionally biased toward pro residues.

As to quaternary structure, monomer or homodimer; disulfide-linked. In terms of tissue distribution, expressed specifically in primary and secondary lymphoid tissues like lymph node, spleen and tonsil. Specifically expressed in B-cells with a high level in normal germinal center B-cells, centroblasts and in a subset of diffuse large B-cell lymphomas. Highly expressed in bone marrow B-cells and weakly in earlier B lineage cells. Expressed in pre-germinal and germinal center B-cells in secondary lymphoid tissues. Also expressed in melanoma and melanocytes.

The protein resides in the cytoplasm. May be implicated in B-cell differentiation and lymphomagenesis. The protein is Fc receptor-like A (FCRLA) of Homo sapiens (Human).